Here is a 48-residue protein sequence, read N- to C-terminus: uncharacterized protein (48 aa).

Positions 1–48 are disordered; that stretch reads MSRRMGGGMPKINLSGAIPNNNTSTPSTPTLRSSVSVSSSNSRGLFLA. Positions 20 to 48 are enriched in low complexity; sequence NNNTSTPSTPTLRSSVSVSSSNSRGLFLA.

This is an uncharacterized protein from Dictyostelium discoideum (Social amoeba).